A 427-amino-acid polypeptide reads, in one-letter code: Glutamate-1-semialdehyde 2,1-aminomutase (427 aa).

N6-(pyridoxal phosphate)lysine is present on Lys-267.

The protein belongs to the class-III pyridoxal-phosphate-dependent aminotransferase family. HemL subfamily. Homodimer. It depends on pyridoxal 5'-phosphate as a cofactor.

The protein localises to the cytoplasm. It catalyses the reaction (S)-4-amino-5-oxopentanoate = 5-aminolevulinate. The protein operates within porphyrin-containing compound metabolism; protoporphyrin-IX biosynthesis; 5-aminolevulinate from L-glutamyl-tRNA(Glu): step 2/2. The protein is Glutamate-1-semialdehyde 2,1-aminomutase of Geobacter sulfurreducens (strain ATCC 51573 / DSM 12127 / PCA).